The chain runs to 414 residues: uncharacterized protein (414 aa).

The first 20 residues, 1–20 (MKKLLAIGILCIMVTAVMSG), serve as a signal peptide directing secretion. Cys21 carries the S-archaeol cysteine lipid modification. The 271-residue stretch at 119–389 (RVIVMSSTEI…DLATILHPEA (271 aa)) folds into the Fe/B12 periplasmic-binding domain.

The protein resides in the cell membrane. This is an uncharacterized protein from Methanocaldococcus jannaschii (strain ATCC 43067 / DSM 2661 / JAL-1 / JCM 10045 / NBRC 100440) (Methanococcus jannaschii).